An 808-amino-acid chain; its full sequence is Quinoprotein glucose dehydrogenase (808 aa).

Residues 1–33 (MSTTSRPGLWALITAAVFALCGAILTVGGAWVA) form the signal peptide. Helical transmembrane passes span 35–54 (IGGPLYYVILGLALLATAFL), 59–76 (NPAALYLFAVVVFGTVIW), 94–108 (IVIILGIWLLLPFVS), and 123–138 (GAVGVAVLALFASLFT). D470 acts as the Proton acceptor in catalysis. The segment at 514–545 (VPAPETPVPQGAAPGDHTSPTQPMSQLTLRPK) is disordered. Residues 531-541 (TSPTQPMSQLT) are compositionally biased toward polar residues.

It belongs to the bacterial PQQ dehydrogenase family. Pyrroloquinoline quinone is required as a cofactor.

The protein resides in the cell inner membrane. It catalyses the reaction a ubiquinone + D-glucose = D-glucono-1,5-lactone + a ubiquinol. This chain is Quinoprotein glucose dehydrogenase (gdh), found in Gluconobacter oxydans (strain 621H) (Gluconobacter suboxydans).